The chain runs to 637 residues: tRNA uridine 5-carboxymethylaminomethyl modification enzyme MnmG (637 aa).

18–23 lines the FAD pocket; that stretch reads GAGHAG. An NAD(+)-binding site is contributed by 281-295; that stretch reads GPRYCPSIEDKIVRF.

It belongs to the MnmG family. In terms of assembly, homodimer. Heterotetramer of two MnmE and two MnmG subunits. It depends on FAD as a cofactor.

Its subcellular location is the cytoplasm. NAD-binding protein involved in the addition of a carboxymethylaminomethyl (cmnm) group at the wobble position (U34) of certain tRNAs, forming tRNA-cmnm(5)s(2)U34. This is tRNA uridine 5-carboxymethylaminomethyl modification enzyme MnmG from Ligilactobacillus salivarius (strain UCC118) (Lactobacillus salivarius).